Reading from the N-terminus, the 315-residue chain is ATP synthase gamma chain (315 aa).

Belongs to the ATPase gamma chain family. F-type ATPases have 2 components, CF(1) - the catalytic core - and CF(0) - the membrane proton channel. CF(1) has five subunits: alpha(3), beta(3), gamma(1), delta(1), epsilon(1). CF(0) has three main subunits: a, b and c.

Its subcellular location is the cellular thylakoid membrane. Produces ATP from ADP in the presence of a proton gradient across the membrane. The gamma chain is believed to be important in regulating ATPase activity and the flow of protons through the CF(0) complex. This is ATP synthase gamma chain from Synechococcus sp. (strain RCC307).